The primary structure comprises 148 residues: uncharacterized protein (148 aa).

Belongs to the serpin family. Poxviruses subfamily.

This is an uncharacterized protein from Fowlpox virus (strain NVSL) (FPV).